The following is a 299-amino-acid chain: MEHFDASLSTYFKAFLGPRDTRVKGWFLLDNYIPTFVCSVIYLLIVWLGPKYMKNRQPFSCRGILQLYNLGLTLLSLYMFYELVTGVWEGKYNFFCQGTRSAGESDMKIIRVLWWYYFSKLIEFMDTFFFILRKNNHQITVLHVYHHATMLNIWWFVMNWVPCGHSYFGATLNSFIHVLMYSYYGLSSIPSMRPYLWWKKYITQGQLVQFVLTIIQTTCGVFWPCSFPLGWLFFQIGYMISLIALFTNFYIQTYNKKGASRRKDHLKGHQNGSVAAVNGHTNSFPSLENSVKPRKQRKD.

Residue M1 is modified to N-acetylmethionine. The next 7 helical transmembrane spans lie at 26–46 (WFLL…LLIV), 64–84 (ILQL…YELV), 112–132 (VLWW…FFIL), 139–158 (ITVL…WFVM), 168–187 (FGAT…YGLS), 205–225 (GQLV…FWPC), and 227–247 (FPLG…ALFT). Residues 274–299 (VAAVNGHTNSFPSLENSVKPRKQRKD) form a disordered region. The segment covering 279 to 289 (GHTNSFPSLEN) has biased composition (polar residues).

It belongs to the ELO family. ELOVL5 subfamily. As to quaternary structure, interacts with TECR.

It localises to the endoplasmic reticulum membrane. It is found in the cell projection. The protein localises to the dendrite. It carries out the reaction a very-long-chain acyl-CoA + malonyl-CoA + H(+) = a very-long-chain 3-oxoacyl-CoA + CO2 + CoA. The catalysed reaction is (6Z,9Z,12Z)-octadecatrienoyl-CoA + malonyl-CoA + H(+) = (8Z,11Z,14Z)-3-oxoeicosatrienoyl-CoA + CO2 + CoA. It catalyses the reaction (9Z,12Z,15Z)-octadecatrienoyl-CoA + malonyl-CoA + H(+) = (11Z,14Z,17Z)-3-oxoeicosatrienoyl-CoA + CO2 + CoA. The enzyme catalyses (9Z)-hexadecenoyl-CoA + malonyl-CoA + H(+) = 3-oxo-(11Z)-octadecenoyl-CoA + CO2 + CoA. It carries out the reaction (9Z)-octadecenoyl-CoA + malonyl-CoA + H(+) = 3-oxo-(11Z)-eicosenoyl-CoA + CO2 + CoA. The catalysed reaction is (11Z)-octadecenoyl-CoA + malonyl-CoA + H(+) = 3-oxo-(13Z)-eicosenoyl-CoA + CO2 + CoA. It catalyses the reaction (9Z,12Z)-octadecadienoyl-CoA + malonyl-CoA + H(+) = (11Z,14Z)-3-oxoicosa-11,14-dienoyl-CoA + CO2 + CoA. The enzyme catalyses (6Z,9Z,12Z,15Z)-octadecatetraenoyl-CoA + malonyl-CoA + H(+) = (8Z,11Z,14Z,17Z)-3-oxoicosatetraenoyl-CoA + CO2 + CoA. It carries out the reaction (5Z,8Z,11Z,14Z)-eicosatetraenoyl-CoA + malonyl-CoA + H(+) = (7Z,10Z,13Z,16Z)-3-oxodocosatetraenoyl-CoA + CO2 + CoA. The catalysed reaction is (5Z,8Z,11Z,14Z,17Z)-eicosapentaenoyl-CoA + malonyl-CoA + H(+) = 3-oxo-(7Z,10Z,13Z,16Z,19Z)-docosapentaenoyl-CoA + CO2 + CoA. Its pathway is lipid metabolism; polyunsaturated fatty acid biosynthesis. Its function is as follows. Catalyzes the first and rate-limiting reaction of the four reactions that constitute the long-chain fatty acids elongation cycle. This endoplasmic reticulum-bound enzymatic process allows the addition of 2 carbons to the chain of long- and very long-chain fatty acids (VLCFAs) per cycle. Condensing enzyme that acts specifically toward polyunsaturated acyl-CoA with the higher activity toward C18:3(n-6) acyl-CoA. May participate in the production of monounsaturated and of polyunsaturated VLCFAs of different chain lengths that are involved in multiple biological processes as precursors of membrane lipids and lipid mediators. In conditions where the essential linoleic and alpha linoleic fatty acids are lacking it is also involved in the synthesis of Mead acid from oleic acid. The polypeptide is Very long chain fatty acid elongase 5 (Mus musculus (Mouse)).